The chain runs to 112 residues: Large ribosomal subunit protein P2 (112 aa).

Residues 69 to 85 (AGGAAMPAAAAGGAPAA) show a composition bias toward low complexity. A disordered region spans residues 69–112 (AGGAAMPAAAAGGAPAAAEDKAEAKKPEAEPEEEEDDMGFSLFD). Residues 86–97 (AEDKAEAKKPEA) show a composition bias toward basic and acidic residues.

This sequence belongs to the eukaryotic ribosomal protein P1/P2 family. In terms of assembly, P1 and P2 exist as dimers at the large ribosomal subunit. Phosphorylated.

Plays an important role in the elongation step of protein synthesis. The polypeptide is Large ribosomal subunit protein P2 (Babesia bovis).